Reading from the N-terminus, the 136-residue chain is Small ribosomal subunit protein uS9 (136 aa).

The protein belongs to the universal ribosomal protein uS9 family.

The protein is Small ribosomal subunit protein uS9 of Borreliella burgdorferi (strain ZS7) (Borrelia burgdorferi).